The primary structure comprises 142 residues: Galactose-binding lectin l-1 (142 aa).

A Galectin domain is found at 3–134 (FVEVKNLIMK…DATVKNISVN (132 aa)). Position 68–74 (68–74 (WQEEQRD)) interacts with a beta-D-galactoside. Asn-130 carries N-linked (GlcNAc...) asparagine glycosylation.

As to quaternary structure, homodimer. In terms of processing, the N-terminus is blocked. As to expression, skin; highest expression in that of individuals showing resistance to infectious disease.

It is found in the secreted. Functionally, involved in host defense at the body surface. Causes agglutination of the Gram-positive bacterium S.difficile. Possesses calcium-independent hemagglutinating activity. This Anguilla japonica (Japanese eel) protein is Galactose-binding lectin l-1.